The following is a 341-amino-acid chain: UDP-N-acetylenolpyruvoylglucosamine reductase (341 aa).

An FAD-binding PCMH-type domain is found at 19–191 (MAVRAAHFCQ…TAVRFRLSRR (173 aa)). Arg167 is an active-site residue. Ser241 serves as the catalytic Proton donor. Residue Glu337 is part of the active site.

The protein belongs to the MurB family. FAD is required as a cofactor.

The protein resides in the cytoplasm. The enzyme catalyses UDP-N-acetyl-alpha-D-muramate + NADP(+) = UDP-N-acetyl-3-O-(1-carboxyvinyl)-alpha-D-glucosamine + NADPH + H(+). Its pathway is cell wall biogenesis; peptidoglycan biosynthesis. Its function is as follows. Cell wall formation. The protein is UDP-N-acetylenolpyruvoylglucosamine reductase of Chromobacterium violaceum (strain ATCC 12472 / DSM 30191 / JCM 1249 / CCUG 213 / NBRC 12614 / NCIMB 9131 / NCTC 9757 / MK).